The sequence spans 436 residues: Tol-Pal system protein TolB (436 aa).

A signal peptide spans 1–28 (MMKCSFFRAILVAVGLMAAAVVATPANA).

Belongs to the TolB family. In terms of assembly, the Tol-Pal system is composed of five core proteins: the inner membrane proteins TolA, TolQ and TolR, the periplasmic protein TolB and the outer membrane protein Pal. They form a network linking the inner and outer membranes and the peptidoglycan layer.

Its subcellular location is the periplasm. Its function is as follows. Part of the Tol-Pal system, which plays a role in outer membrane invagination during cell division and is important for maintaining outer membrane integrity. The sequence is that of Tol-Pal system protein TolB from Rhizobium etli (strain CIAT 652).